Reading from the N-terminus, the 350-residue chain is Biotin synthase (350 aa).

The Radical SAM core domain maps to Arg-54–Ser-278. [4Fe-4S] cluster-binding residues include Cys-69, Cys-73, and Cys-76. Cys-113, Cys-144, Cys-204, and Arg-276 together coordinate [2Fe-2S] cluster.

This sequence belongs to the radical SAM superfamily. Biotin synthase family. In terms of assembly, homodimer. The cofactor is [4Fe-4S] cluster. Requires [2Fe-2S] cluster as cofactor.

It carries out the reaction (4R,5S)-dethiobiotin + (sulfur carrier)-SH + 2 reduced [2Fe-2S]-[ferredoxin] + 2 S-adenosyl-L-methionine = (sulfur carrier)-H + biotin + 2 5'-deoxyadenosine + 2 L-methionine + 2 oxidized [2Fe-2S]-[ferredoxin]. The protein operates within cofactor biosynthesis; biotin biosynthesis; biotin from 7,8-diaminononanoate: step 2/2. Its function is as follows. Catalyzes the conversion of dethiobiotin (DTB) to biotin by the insertion of a sulfur atom into dethiobiotin via a radical-based mechanism. This chain is Biotin synthase, found in Neisseria gonorrhoeae (strain ATCC 700825 / FA 1090).